The primary structure comprises 358 residues: Uroporphyrinogen decarboxylase (358 aa).

Residues 29–33 (RQAGR), Phe-48, Asp-79, Tyr-155, Ser-210, and His-330 contribute to the substrate site.

It belongs to the uroporphyrinogen decarboxylase family. In terms of assembly, homodimer.

It localises to the cytoplasm. It catalyses the reaction uroporphyrinogen III + 4 H(+) = coproporphyrinogen III + 4 CO2. It participates in porphyrin-containing compound metabolism; protoporphyrin-IX biosynthesis; coproporphyrinogen-III from 5-aminolevulinate: step 4/4. Functionally, catalyzes the decarboxylation of four acetate groups of uroporphyrinogen-III to yield coproporphyrinogen-III. This is Uroporphyrinogen decarboxylase from Bordetella pertussis (strain Tohama I / ATCC BAA-589 / NCTC 13251).